We begin with the raw amino-acid sequence, 133 residues long: Putative pre-16S rRNA nuclease (133 aa).

This sequence belongs to the YqgF nuclease family.

It localises to the cytoplasm. Its function is as follows. Could be a nuclease involved in processing of the 5'-end of pre-16S rRNA. This chain is Putative pre-16S rRNA nuclease, found in Bordetella pertussis (strain Tohama I / ATCC BAA-589 / NCTC 13251).